The sequence spans 510 residues: D-allose import ATP-binding protein AlsA (510 aa).

2 ABC transporter domains span residues 6 to 245 and 260 to 509; these read ISMA…VGRE and LAHE…ALPQ. ATP is bound at residue 38–45; sequence GENGAGKS.

This sequence belongs to the ABC transporter superfamily. D-allose importer (TC 3.A.1.2.6) family. In terms of assembly, the complex is composed of two ATP-binding proteins (AlsA), two transmembrane proteins (AlsC) and a solute-binding protein (AlsB).

The protein localises to the cell inner membrane. It carries out the reaction D-allose(out) + ATP + H2O = D-allose(in) + ADP + phosphate + H(+). Part of the ABC transporter complex AlsBAC involved in D-allose import. Probably responsible for energy coupling to the transport system. This is D-allose import ATP-binding protein AlsA (alsA) from Escherichia coli (strain K12).